The sequence spans 274 residues: 5'-3' exoribonuclease (274 aa).

Mn(2+) is bound by residues histidine 8, histidine 10, aspartate 15, histidine 40, glutamate 65, histidine 76, histidine 190, aspartate 247, and histidine 249.

Belongs to the PHP family. TrpH/YciV subfamily. The cofactor is Mn(2+).

The enzyme catalyses a ribonucleoside 3',5'-bisphosphate + H2O = a ribonucleoside 5'-phosphate + phosphate. Its function is as follows. Efficiently catalyzes the hydrolysis of the 3'-phosphate from 3',5'-bis-phosphonucleotides as well as the successive hydrolysis of 5'-phosphomononucleotides from the 5'-end of short pieces of RNA and DNA, with no specificity toward the identity of the nucleotide base. Is more efficient at hydrolyzing RNA oligonucleotides than DNA oligonucleotides. This enzyme can also hydrolyze annealed DNA duplexes, albeit at a catalytic efficiency lower than that of the corresponding single-stranded oligonucleotides. The polypeptide is 5'-3' exoribonuclease (Haemophilus influenzae (strain ATCC 51907 / DSM 11121 / KW20 / Rd)).